A 396-amino-acid chain; its full sequence is Inositol polyphosphate 1-phosphatase (396 aa).

D54 contacts Li(+). E79 provides a ligand contact to Mg(2+). E80 contributes to the Li(+) binding site. Residues D153 and I155 each contribute to the Mg(2+) site. 1D-myo-inositol 1,4-bisphosphate-binding residues include D156, S157, T158, S264, K266, G286, A287, K290, and T308. D313 contributes to the Mg(2+) binding site. S314 is subject to Phosphoserine.

This sequence belongs to the inositol monophosphatase superfamily. In terms of assembly, monomer. Requires Mg(2+) as cofactor.

The catalysed reaction is 1D-myo-inositol 1,4-bisphosphate + H2O = 1D-myo-inositol 4-phosphate + phosphate. It catalyses the reaction 1D-myo-inositol 1,3,4-trisphosphate + H2O = 1D-myo-inositol 3,4-bisphosphate + phosphate. It functions in the pathway signal transduction; phosphatidylinositol signaling pathway. With respect to regulation, inhibited by Li(+). Its function is as follows. Mg(2+)-dependent phosphatase that catalyzes the hydrolysis of the 1-position phosphate from inositol 1,4-bisphosphate and inositol 1,3,4-trisphosphate and participates in inositol phosphate metabolism. The sequence is that of Inositol polyphosphate 1-phosphatase from Mus musculus (Mouse).